The primary structure comprises 328 residues: Nucleotide-binding protein Blon_1085/BLIJ_1109 (328 aa).

The disordered stretch occupies residues 1 to 33 (MSQQTTIRDTGEAAATNAPANSATSTSTPDNQP). Residues 13–29 (AAATNAPANSATSTSTP) show a composition bias toward low complexity. 46 to 53 (GMSGAGRS) is a binding site for ATP. GTP is bound at residue 101 to 104 (DVRS).

Belongs to the RapZ-like family.

Functionally, displays ATPase and GTPase activities. The polypeptide is Nucleotide-binding protein Blon_1085/BLIJ_1109 (Bifidobacterium longum subsp. infantis (strain ATCC 15697 / DSM 20088 / JCM 1222 / NCTC 11817 / S12)).